We begin with the raw amino-acid sequence, 1388 residues long: ESX-5 secretion system protein EccC5 (1388 aa).

Helical transmembrane passes span 38–58 and 65–85; these read WLIV…AMVF and FGGV…MMMF. 3 FtsK domains span residues 477 to 679, 855 to 1049, and 1158 to 1351; these read GELL…GAAQ, QPPW…EDAK, and LQPV…DPDE. ATP is bound by residues 500–507, 873–880, and 1175–1182; these read GTTGSGKS, GAGGSGKT, and GRRECGRT.

In terms of assembly, part of the ESX-5 / type VII secretion system (T7SS), which is composed of cytosolic and membrane components. The ESX-5 membrane complex is composed of EccB5, EccC5, EccD5 and EccE5.

It is found in the cell inner membrane. Its function is as follows. Part of the ESX-5 specialized secretion system, which is responsible for the secretion of EsxN and a number of PE_PGRS and PPE proteins. This component is essential for ESX-5 complex stability and secretion. The chain is ESX-5 secretion system protein EccC5 from Mycobacterium marinum (strain ATCC BAA-535 / M).